Consider the following 38-residue polypeptide: Large ribosomal subunit protein bL36 (38 aa).

The protein belongs to the bacterial ribosomal protein bL36 family.

This Roseiflexus castenholzii (strain DSM 13941 / HLO8) protein is Large ribosomal subunit protein bL36.